A 953-amino-acid chain; its full sequence is Isoleucine--tRNA ligase (953 aa).

The 'HIGH' region motif lies at 57-67 (PYANGDIHIGH). Position 582 (Glu-582) interacts with L-isoleucyl-5'-AMP. Residues 623–627 (KMSKS) carry the 'KMSKS' region motif. Residue Lys-626 coordinates ATP. Zn(2+)-binding residues include Cys-916, Cys-919, Cys-936, and Cys-939.

It belongs to the class-I aminoacyl-tRNA synthetase family. IleS type 1 subfamily. Monomer. Zn(2+) is required as a cofactor.

It is found in the cytoplasm. The catalysed reaction is tRNA(Ile) + L-isoleucine + ATP = L-isoleucyl-tRNA(Ile) + AMP + diphosphate. Catalyzes the attachment of isoleucine to tRNA(Ile). As IleRS can inadvertently accommodate and process structurally similar amino acids such as valine, to avoid such errors it has two additional distinct tRNA(Ile)-dependent editing activities. One activity is designated as 'pretransfer' editing and involves the hydrolysis of activated Val-AMP. The other activity is designated 'posttransfer' editing and involves deacylation of mischarged Val-tRNA(Ile). The sequence is that of Isoleucine--tRNA ligase from Bordetella avium (strain 197N).